The primary structure comprises 448 residues: Rhodanese-like domain-containing protein 8, chloroplastic (448 aa).

Residues 1–23 (MRVSPAATLSVSLTTPLPITLTK) constitute a chloroplast transit peptide. One can recognise a Rhodanese domain in the interval 220-323 (SGKSYILLDV…YLKEEGTAEW (104 aa)). Catalysis depends on cysteine 283, which acts as the Cysteine persulfide intermediate.

Its subcellular location is the plastid. It localises to the chloroplast. In Arabidopsis thaliana (Mouse-ear cress), this protein is Rhodanese-like domain-containing protein 8, chloroplastic (STR8).